The following is a 466-amino-acid chain: Cytochrome c-552 (466 aa).

The signal sequence occupies residues 1 to 27; the sequence is MVRILTKKSFALSALVAASLMASGAMA. Residue His-87 coordinates heme c. Heme contacts are provided by Cys-115, Cys-118, and Lys-119. Positions 153, 156, 157, 195, 198, and 199 each coordinate heme c. Glu-201, Tyr-202, Lys-250, and Gln-252 together coordinate Ca(2+). Tyr-202 lines the substrate pocket. His-253 serves as a coordination point for substrate. Heme c contacts are provided by His-264, Cys-271, Cys-274, His-275, His-290, Cys-303, Cys-306, His-307, and His-382.

This sequence belongs to the cytochrome c-552 family. Requires Ca(2+) as cofactor. The cofactor is heme c.

Its subcellular location is the periplasm. The enzyme catalyses 6 Fe(III)-[cytochrome c] + NH4(+) + 2 H2O = 6 Fe(II)-[cytochrome c] + nitrite + 8 H(+). It participates in nitrogen metabolism; nitrate reduction (assimilation). Functionally, catalyzes the reduction of nitrite to ammonia, consuming six electrons in the process. This is Cytochrome c-552 from Shewanella woodyi (strain ATCC 51908 / MS32).